We begin with the raw amino-acid sequence, 165 residues long: V-type proton ATPase 16 kDa proteolipid subunit (165 aa).

Residues 1–10 (MSSTFSGDET) lie on the Lumenal side of the membrane. The helical transmembrane segment at 11-33 (APFFGFLGAAAALVFSCMGAAYG) threads the bilayer. At 34 to 55 (TAKSGVGVASMGVMRPELVMKS) the chain is on the cytoplasmic side. The chain crosses the membrane as a helical span at residues 56–76 (IVPVVMAGVLGIYGLIIAVII). At 77 to 95 (STGINPKAKSYYLFDGYAH) the chain is on the lumenal side. A helical transmembrane segment spans residues 96–117 (LSSGLACGLAGLSAGMAIGIVG). Residues 118–129 (DAGVRANAQQPK) lie on the Cytoplasmic side of the membrane. A helical membrane pass occupies residues 130-155 (LFVGMILILIFAEALALYGLIVGIIL). Residues 156–165 (SSRAGQSRAD) are Lumenal-facing.

It belongs to the V-ATPase proteolipid subunit family. V-ATPase is a heteromultimeric enzyme composed of a peripheral catalytic V1 complex (main components: subunits A, B, C, D, E, and F) attached to an integral membrane V0 proton pore complex (main component: the proteolipid protein; which is present as a hexamer that forms the proton-conducting pore). As to expression, higher expression in leaves, followed by roots and weakly in flowers. Expression in leaves is light-dependent.

The protein localises to the vacuole membrane. Functionally, proton-conducting pore forming subunit of the membrane integral V0 complex of vacuolar ATPase. V-ATPase is responsible for acidifying a variety of intracellular compartments in eukaryotic cells. Necessary for the crassulacean acid metabolism. This chain is V-type proton ATPase 16 kDa proteolipid subunit, found in Kalanchoe daigremontiana (Devil's backbone).